We begin with the raw amino-acid sequence, 124 residues long: uncharacterized protein (124 aa).

Positions 1–28 (MGTSLRSQSFREPRPSYGRLHESQGRSL) are disordered. Positions 9–28 (SFREPRPSYGRLHESQGRSL) are enriched in basic and acidic residues.

This is an uncharacterized protein from Mus musculus (Mouse).